A 305-amino-acid chain; its full sequence is P2Y purinoceptor 14 (305 aa).

Residues 1-29 lie on the Extracellular side of the membrane; the sequence is MDNTTTTEPPKQPCTRNTLITQQIIPMLY. N3 carries N-linked (GlcNAc...) asparagine glycosylation. Residues 30–50 form a helical membrane-spanning segment; that stretch reads CVVFITGVLLNGISGWIFFYV. The Cytoplasmic segment spans residues 51-55; sequence PSSKS. A helical membrane pass occupies residues 56-76; the sequence is FIIYLKNIVVADFLMGLTFPF. Over 77 to 96 the chain is Extracellular; sequence KVLSDSGLGPWQLNVFVFRV. Residues 97 to 117 traverse the membrane as a helical segment; it reads SAVIFYVNMYVSIAFFGLISF. Residues 118-139 lie on the Cytoplasmic side of the membrane; the sequence is DRYYKIVKPLLVSIVQSVNYSK. A helical transmembrane segment spans residues 140-160; that stretch reads VLSVLVWVLMLLLAVPNIILT. N-linked (GlcNAc...) asparagine glycosylation is present at N161. Residues 161–188 lie on the Extracellular side of the membrane; sequence NQSVKDVTNIQCMELKNELGRKWHKASN. A helical membrane pass occupies residues 189-209; it reads YVFVSIFWIVFLLLTVFYMAI. The Cytoplasmic segment spans residues 210–234; that stretch reads TRKIFKSHLKSRKNSISVKRKSSRN. A helical transmembrane segment spans residues 235 to 255; it reads IFSIVLAFVACFAPYHVARIP. Over 256–278 the chain is Extracellular; it reads YTKSQTEGHYSCQAKETLLYTKE. A helical transmembrane segment spans residues 279 to 299; the sequence is FTLLLSAANVCLDPISISSYA. Over 300 to 305 the chain is Cytoplasmic; it reads SRLEKS.

The protein belongs to the G-protein coupled receptor 1 family.

The protein localises to the cell membrane. In terms of biological role, receptor for UDP-glucose coupled to G-proteins. The polypeptide is P2Y purinoceptor 14 (P2ry14) (Rattus norvegicus (Rat)).